The sequence spans 331 residues: Ketol-acid reductoisomerase (NADP(+)) (331 aa).

The 181-residue stretch at 2–182 folds into the KARI N-terminal Rossmann domain; sequence ARLYYDADAN…GGTRAGILET (181 aa). Residues 25-28, Ser51, Ser53, and 83-86 each bind NADP(+); these read YGSQ and DEVQ. Residue His108 is part of the active site. Gly134 lines the NADP(+) pocket. In terms of domain architecture, KARI C-terminal knotted spans 183 to 328; sequence TFREETETDL…KDLRAMFSWL (146 aa). Mg(2+)-binding residues include Asp191, Glu195, Glu227, and Glu231. Ser252 lines the substrate pocket.

The protein belongs to the ketol-acid reductoisomerase family. Requires Mg(2+) as cofactor.

It carries out the reaction (2R)-2,3-dihydroxy-3-methylbutanoate + NADP(+) = (2S)-2-acetolactate + NADPH + H(+). It catalyses the reaction (2R,3R)-2,3-dihydroxy-3-methylpentanoate + NADP(+) = (S)-2-ethyl-2-hydroxy-3-oxobutanoate + NADPH + H(+). It functions in the pathway amino-acid biosynthesis; L-isoleucine biosynthesis; L-isoleucine from 2-oxobutanoate: step 2/4. It participates in amino-acid biosynthesis; L-valine biosynthesis; L-valine from pyruvate: step 2/4. In terms of biological role, involved in the biosynthesis of branched-chain amino acids (BCAA). Catalyzes an alkyl-migration followed by a ketol-acid reduction of (S)-2-acetolactate (S2AL) to yield (R)-2,3-dihydroxy-isovalerate. In the isomerase reaction, S2AL is rearranged via a Mg-dependent methyl migration to produce 3-hydroxy-3-methyl-2-ketobutyrate (HMKB). In the reductase reaction, this 2-ketoacid undergoes a metal-dependent reduction by NADPH to yield (R)-2,3-dihydroxy-isovalerate. The protein is Ketol-acid reductoisomerase (NADP(+)) of Cyanothece sp. (strain PCC 7425 / ATCC 29141).